Here is a 625-residue protein sequence, read N- to C-terminus: Enolase 4 (625 aa).

A disordered region spans residues 184–226 (YSTVPTPLPPVPPPPPPPPPTKKKGQKPGRKDTITEKPIAPAE). Positions 189–203 (TPLPPVPPPPPPPPP) are enriched in pro residues. Residue Val-300 participates in substrate binding. Residues 331–350 (PSPPKAETKKGHDGSKRGQQ) form a disordered region. Residues 336-346 (AETKKGHDGSK) show a composition bias toward basic and acidic residues. The Proton acceptor role is filled by Asn-497. Gly-548 lines the substrate pocket. A disordered region spans residues 604 to 625 (PLVPTFPTQGVEESAETGASSG).

Belongs to the enolase family. Interacts with ENO1 and AKAP4. Post-translationally, synthesized as an approximately 70-kDa precursor, which then undergoes proteolytic cleavage to an approximately 60-kDa enzyme; HOATZ associates directly or indirectly with ENO4 to mediate this process before its transport to mature flagella.

It carries out the reaction (2R)-2-phosphoglycerate = phosphoenolpyruvate + H2O. Its pathway is carbohydrate degradation; glycolysis; pyruvate from D-glyceraldehyde 3-phosphate: step 4/5. May be required for sperm motility and function. The protein is Enolase 4 of Homo sapiens (Human).